We begin with the raw amino-acid sequence, 991 residues long: Transcription factor ROB1 (991 aa).

The segment at residues cysteine 17 to cysteine 43 is a DNA-binding region (zn(2)-C6 fungal-type). Disordered stretches follow at residues leucine 150–alanine 188, phenylalanine 792–proline 875, and glutamine 901–proline 959. A compositionally biased stretch (low complexity) spans glutamine 152 to serine 168. The segment covering alanine 169–leucine 187 has biased composition (polar residues). Positions glutamine 795 to glutamine 806 are enriched in low complexity. Composition is skewed to basic and acidic residues over residues proline 807–glutamate 817 and glutamine 825–lysine 855. A compositionally biased stretch (low complexity) spans glutamine 907–glutamine 931.

The protein localises to the nucleus. In terms of biological role, transcription factor that mediates conventional biofilm formation and plays a key role in microcolony formation under both flow and static conditions and to epithelial surfaces. Modulates infection of mammalian hosts. This Candida albicans (strain SC5314 / ATCC MYA-2876) (Yeast) protein is Transcription factor ROB1.